Consider the following 177-residue polypeptide: Dual-action ribosomal maturation protein DarP (177 aa).

The protein belongs to the DarP family.

Its subcellular location is the cytoplasm. Its function is as follows. Member of a network of 50S ribosomal subunit biogenesis factors which assembles along the 30S-50S interface, preventing incorrect 23S rRNA structures from forming. Promotes peptidyl transferase center (PTC) maturation. This is Dual-action ribosomal maturation protein DarP from Histophilus somni (strain 2336) (Haemophilus somnus).